A 58-amino-acid polypeptide reads, in one-letter code: MARYRRRSRSRSRSRYGRRRRRSRSRRRRSRRRRRRRGRRGRGYHRRSPHRRRRRRRR.

Positions 1–58 are disordered; sequence MARYRRRSRSRSRSRYGRRRRRSRSRRRRSRRRRRRRGRRGRGYHRRSPHRRRRRRRR.

It belongs to the protamine P1 family. As to expression, testis.

The protein resides in the nucleus. It is found in the chromosome. Its function is as follows. Protamines substitute for histones in the chromatin of sperm during the haploid phase of spermatogenesis. They compact sperm DNA into a highly condensed, stable and inactive complex. The chain is Sperm protamine P1 (PRM1) from Monodelphis domestica (Gray short-tailed opossum).